The following is a 198-amino-acid chain: MRYVGRTLGIGLNNGKPFAFYLLCSRSFPNRRAVVKGNGVYILNQTETENPYVSYPVVRLMEDYAVVTNGLHTDFIAQALEWERPRKALVHVLDALDYERDDYSTPRIAGIIQHGGRRGWLGFVGRDMLWMRELELEEGKAFLTATYNMEGFESIELAFSTPEELAEKVMELPFEHKVLAIGIVENEKGWELSFTPSL.

This sequence belongs to the archaeal IMP cyclohydrolase family.

It catalyses the reaction IMP + H2O = 5-formamido-1-(5-phospho-D-ribosyl)imidazole-4-carboxamide. The protein operates within purine metabolism; IMP biosynthesis via de novo pathway; IMP from 5-formamido-1-(5-phospho-D-ribosyl)imidazole-4-carboxamide: step 1/1. Catalyzes the cyclization of 5-formylamidoimidazole-4-carboxamide ribonucleotide to IMP. The protein is IMP cyclohydrolase of Thermococcus kodakarensis (strain ATCC BAA-918 / JCM 12380 / KOD1) (Pyrococcus kodakaraensis (strain KOD1)).